The sequence spans 341 residues: MNKLISILVPCYQSQPFLDRFFKSLLKQDWNGVKVIFFNDNKPDPTYEILKQFQQAHPQLAIEVHCGEKNVGVGGSRDQLINYVDTPYFYFVDPDDEFSDPNCFKAIVETIQGENFDIAVLNSIVYLQMLKNDFLIKHIPLKNIFQGKVKLNPDNTVNHLHYIQNNDQYIWNIVINTAFFKALDLQFVNRFIEDIAVWFPIMFKAQKVLWIDVNGVNYYLRPNSASTQKNSIKLLSFIEAYERLYFHLKKVGKLADFIDPNNKIESRFWRRQAFIWFSFINVSWMKAEFEQTKSVLQKLFDFMEANGIYDRVFTNKHHGIYLLWVNRLKHFKKLVQAQPHL.

The protein belongs to the glycosyltransferase 2 family. Requires Mg(2+) as cofactor.

The protein resides in the cell membrane. The catalysed reaction is a 1,2-diacyl-sn-glycerol + UDP-alpha-D-glucose = a 1,2-diacyl-3-O-(beta-D-glucopyranosyl)-sn-glycerol + UDP + H(+). It catalyses the reaction a 1,2-diacyl-sn-glycerol + UDP-alpha-D-galactose = a 1,2-diacyl-3-O-(beta-D-galactosyl)-sn-glycerol + UDP + H(+). The enzyme catalyses a 1,2-diacyl-3-O-(beta-D-galactosyl)-sn-glycerol + UDP-alpha-D-glucose = a 1,2-diacyl-3-O-[beta-D-glucopyranosyl-(1-&gt;6)-beta-D-galactopyranosyl]-sn-glycerol + UDP + H(+). It carries out the reaction a 1,2-diacyl-3-O-(beta-D-galactosyl)-sn-glycerol + UDP-alpha-D-galactose = a 1,2-diacyl-3-O-[beta-D-galactosyl-(1-&gt;6)-beta-D-galactosyl]-sn-glycerol + UDP + H(+). Its activity is regulated as follows. Activated by the negatively charged lipid phosphatidylglycerol (PG). Functionally, processive glycosyltransferase involved in the biosynthesis of both the non-bilayer-prone beta-monoglycosyldiacylglycerol and the bilayer-forming membrane lipid glucosyl-galactosyldiacylglycerol and digalactosyl-diacylglycerol. These components contribute to regulate the properties and stability of the membrane. Catalyzes sequentially the transfers of glucosyl or galactosyl residues from UDP-Glc or UDP-Gal to diacylglycerol (DAG) acceptor to form the corresponding beta-glycosyl-DAG (3-O-(beta-D-glycopyranosyl)-1,2-diacyl-sn-glycerol). Then, only beta-galactosyl-DAG (3-O-(beta-D-galactopyranosyl)-1,2-diacyl-sn-glycerol) can act as acceptor to give the beta-glycosyl-beta-galactosyl-DAG product (3-O-(beta-D-glycopyranosyl-(1-&gt;6)-D-galactopyranosyl)-1,2-diacyl-sn-glycerol). It can also use alpha-Gal-beta-Gal-DAG, ceramide (Cer) and beta-Gal-Cer as sugar acceptors. The enzyme is supposed to be mainly a galactosyltransferase, with higher glycosyltransferase activity for the addition of the second glycosyl on beta-Gal-DAG as acceptor. The main glycolipid produced in vivo is beta-Glc-beta-Gal-DAG with a beta-1,6 linkage. The polypeptide is Processive diacylglycerol beta-glycosyltransferase (Mycoplasma pneumoniae (strain ATCC 29342 / M129 / Subtype 1) (Mycoplasmoides pneumoniae)).